Consider the following 354-residue polypeptide: Ribosomal RNA large subunit methyltransferase M (354 aa).

S-adenosyl-L-methionine contacts are provided by residues Ser183, 216–219 (SPGG), Asp235, Asp255, and Asp271. Lys300 (proton acceptor) is an active-site residue.

Belongs to the class I-like SAM-binding methyltransferase superfamily. RNA methyltransferase RlmE family. RlmM subfamily. In terms of assembly, monomer.

It is found in the cytoplasm. It catalyses the reaction cytidine(2498) in 23S rRNA + S-adenosyl-L-methionine = 2'-O-methylcytidine(2498) in 23S rRNA + S-adenosyl-L-homocysteine + H(+). Functionally, catalyzes the 2'-O-methylation at nucleotide C2498 in 23S rRNA. This Pseudomonas putida (strain GB-1) protein is Ribosomal RNA large subunit methyltransferase M.